Reading from the N-terminus, the 218-residue chain is Octanoyltransferase (218 aa).

In terms of domain architecture, BPL/LPL catalytic spans 27–210; it reads TGGEDTLYLV…QFLAIFTHPA (184 aa). Substrate-binding positions include 72–79, 139–141, and 152–154; these read RGGNITCH, SIG, and GLA. The active-site Acyl-thioester intermediate is Cys170.

It belongs to the LipB family.

It localises to the cytoplasm. The enzyme catalyses octanoyl-[ACP] + L-lysyl-[protein] = N(6)-octanoyl-L-lysyl-[protein] + holo-[ACP] + H(+). It participates in protein modification; protein lipoylation via endogenous pathway; protein N(6)-(lipoyl)lysine from octanoyl-[acyl-carrier-protein]: step 1/2. Its function is as follows. Catalyzes the transfer of endogenously produced octanoic acid from octanoyl-acyl-carrier-protein onto the lipoyl domains of lipoate-dependent enzymes. Lipoyl-ACP can also act as a substrate although octanoyl-ACP is likely to be the physiological substrate. The polypeptide is Octanoyltransferase (Nitratidesulfovibrio vulgaris (strain ATCC 29579 / DSM 644 / CCUG 34227 / NCIMB 8303 / VKM B-1760 / Hildenborough) (Desulfovibrio vulgaris)).